A 200-amino-acid chain; its full sequence is COMM domain-containing protein 7 (200 aa).

The COMM domain occupies 133–200 (QLVDMEWKFG…RVRTSMECFS (68 aa)).

This sequence belongs to the COMM domain-containing protein 7 family. Component of the commander complex consisting of the CCC subcomplex and the retriever subcomplex. Component of the CCC (COMMD/CCDC22/CCDC93) subcomplex consisting of COMMD1, COMMD2, COMMD3, COMMD4, COMMD5, COMMD6, COMMD7, COMMD8, COMMD9, COMMD10, CCDC22 and CCDC93; within the complex forms a heterodimer with COMMD9. Interacts with RELA. Interacts with CCDC22, CCDC93, SCNN1B, CUL7.

The protein localises to the cytoplasmic vesicle. Functionally, scaffold protein in the commander complex that is essential for endosomal recycling of transmembrane cargos; the commander complex is composed of the CCC subcomplex and the retriever subcomplex. May modulate activity of cullin-RING E3 ubiquitin ligase (CRL) complexes. Associates with the NF-kappa-B complex and suppresses its transcriptional activity. The polypeptide is COMM domain-containing protein 7 (COMMD7) (Bos taurus (Bovine)).